The chain runs to 257 residues: Pyridoxine 5'-phosphate synthase (257 aa).

Asn-16 serves as a coordination point for 3-amino-2-oxopropyl phosphate. 18-19 (DH) is a binding site for 1-deoxy-D-xylulose 5-phosphate. Arg-27 is a 3-amino-2-oxopropyl phosphate binding site. The Proton acceptor role is filled by His-52. 1-deoxy-D-xylulose 5-phosphate contacts are provided by Arg-54 and His-59. The active-site Proton acceptor is the Glu-79. A 1-deoxy-D-xylulose 5-phosphate-binding site is contributed by Thr-109. His-200 acts as the Proton donor in catalysis. 3-amino-2-oxopropyl phosphate is bound by residues Gly-201 and 222-223 (GH).

Belongs to the PNP synthase family. Homooctamer; tetramer of dimers.

It localises to the cytoplasm. The catalysed reaction is 3-amino-2-oxopropyl phosphate + 1-deoxy-D-xylulose 5-phosphate = pyridoxine 5'-phosphate + phosphate + 2 H2O + H(+). Its pathway is cofactor biosynthesis; pyridoxine 5'-phosphate biosynthesis; pyridoxine 5'-phosphate from D-erythrose 4-phosphate: step 5/5. Catalyzes the complicated ring closure reaction between the two acyclic compounds 1-deoxy-D-xylulose-5-phosphate (DXP) and 3-amino-2-oxopropyl phosphate (1-amino-acetone-3-phosphate or AAP) to form pyridoxine 5'-phosphate (PNP) and inorganic phosphate. In Burkholderia pseudomallei (strain 1710b), this protein is Pyridoxine 5'-phosphate synthase.